A 437-amino-acid polypeptide reads, in one-letter code: Glutamate-1-semialdehyde 2,1-aminomutase (437 aa).

An N6-(pyridoxal phosphate)lysine modification is found at Lys272.

It belongs to the class-III pyridoxal-phosphate-dependent aminotransferase family. HemL subfamily. As to quaternary structure, homodimer. It depends on pyridoxal 5'-phosphate as a cofactor.

Its subcellular location is the cytoplasm. It catalyses the reaction (S)-4-amino-5-oxopentanoate = 5-aminolevulinate. The protein operates within porphyrin-containing compound metabolism; protoporphyrin-IX biosynthesis; 5-aminolevulinate from L-glutamyl-tRNA(Glu): step 2/2. The sequence is that of Glutamate-1-semialdehyde 2,1-aminomutase from Moorella thermoacetica (strain ATCC 39073 / JCM 9320).